Reading from the N-terminus, the 654-residue chain is Tetratricopeptide repeat protein 30 homolog (654 aa).

7 TPR repeats span residues 10–43, 44–76, 143–176, 178–210, 384–417, 449–483, and 533–566; these read EGHVTRTIYNLIKDKRYEDVIECITNIGEAANTR, AGLSTLGHCYYHAQKYEEAATCYEQLCQLAPKE, ADTLNDEGCLLYQADQHESAVQRFQAALQVGGFN, LVAYNVALAHFQRKQRAQALDYTSEIVERGVRN, LAAKVQEVRATNEQHALRDALKDYEQALELYLPV, AVWRLNAGHVLFMQGDKYNEAAAFYEPIVRQHSDD, and CIVNLVVGTLYCAKSNYEFGLTRIAHALEGGAGG.

The protein belongs to the TTC30/dfy-1/fleer family.

It localises to the cell projection. The protein resides in the cilium. In terms of biological role, required for polyglutamylation of axonemal tubulin in sensory cilia. Plays a role in anterograde intraflagellar transport (IFT), the process by which cilia precursors are transported from the base of the cilium to the site of their incorporation at the tip. The chain is Tetratricopeptide repeat protein 30 homolog from Drosophila pseudoobscura pseudoobscura (Fruit fly).